The primary structure comprises 325 residues: VSG expression site-associated protein 117A (325 aa).

Positions 1-23 (MKVTIVELVVWLFSVNFFVVVAE) are cleaved as a signal peptide. Asn72, Asn290, and Asn313 each carry an N-linked (GlcNAc...) asparagine glycan.

Its function is as follows. Not known but may be related to activation of the variant surface glycoprotein genes. In Trypanosoma brucei brucei, this protein is VSG expression site-associated protein 117A.